Here is a 201-residue protein sequence, read N- to C-terminus: Imidazoleglycerol-phosphate dehydratase (201 aa).

Belongs to the imidazoleglycerol-phosphate dehydratase family.

The protein localises to the cytoplasm. It catalyses the reaction D-erythro-1-(imidazol-4-yl)glycerol 3-phosphate = 3-(imidazol-4-yl)-2-oxopropyl phosphate + H2O. The protein operates within amino-acid biosynthesis; L-histidine biosynthesis; L-histidine from 5-phospho-alpha-D-ribose 1-diphosphate: step 6/9. This is Imidazoleglycerol-phosphate dehydratase from Prochlorococcus marinus subsp. pastoris (strain CCMP1986 / NIES-2087 / MED4).